The following is a 613-amino-acid chain: Dihydroxy-acid dehydratase (613 aa).

A Mg(2+)-binding site is contributed by Asp-81. Cys-122 is a binding site for [2Fe-2S] cluster. Residues Asp-123 and Lys-124 each contribute to the Mg(2+) site. Lys-124 is modified (N6-carboxylysine). Cys-195 contacts [2Fe-2S] cluster. Residue Glu-491 coordinates Mg(2+). Ser-517 serves as the catalytic Proton acceptor.

This sequence belongs to the IlvD/Edd family. In terms of assembly, homodimer. [2Fe-2S] cluster serves as cofactor. The cofactor is Mg(2+).

The catalysed reaction is (2R)-2,3-dihydroxy-3-methylbutanoate = 3-methyl-2-oxobutanoate + H2O. It catalyses the reaction (2R,3R)-2,3-dihydroxy-3-methylpentanoate = (S)-3-methyl-2-oxopentanoate + H2O. Its pathway is amino-acid biosynthesis; L-isoleucine biosynthesis; L-isoleucine from 2-oxobutanoate: step 3/4. The protein operates within amino-acid biosynthesis; L-valine biosynthesis; L-valine from pyruvate: step 3/4. Functionally, functions in the biosynthesis of branched-chain amino acids. Catalyzes the dehydration of (2R,3R)-2,3-dihydroxy-3-methylpentanoate (2,3-dihydroxy-3-methylvalerate) into 2-oxo-3-methylpentanoate (2-oxo-3-methylvalerate) and of (2R)-2,3-dihydroxy-3-methylbutanoate (2,3-dihydroxyisovalerate) into 2-oxo-3-methylbutanoate (2-oxoisovalerate), the penultimate precursor to L-isoleucine and L-valine, respectively. The polypeptide is Dihydroxy-acid dehydratase (Vibrio vulnificus (strain CMCP6)).